Here is a 969-residue protein sequence, read N- to C-terminus: Aspartic protease 5 (969 aa).

A signal peptide spans 1–22 (MEAGAMGGSSFLSFSSGPSAET). A compositionally biased stretch (low complexity) spans 1-45 (MEAGAMGGSSFLSFSSGPSAETSPSSLSPPTSSSPSPSPQLVSDS). 5 disordered regions span residues 1–65 (MEAG…SSRT), 79–104 (ENEAAPTISQEERRGGSMTAASAGHL), 128–149 (SSATSVLSLGGERGRPPSRSSS), 173–193 (SSSSPLSPLPHPRGAPASACG), and 311–382 (FLSL…DLPR). Over 23 to 820 (SPSSLSPPTS…PEGLPLSPQQ (798 aa)) the chain is Lumenal. Residues 311-324 (FLSLSSSPRSLASD) show a composition bias toward low complexity. Basic and acidic residues predominate over residues 335–355 (QSREQRGEREGERQRPDKGEE). Residues 413–758 (YFLDILVGTP…DREQDRVGFA (346 aa)) enclose the Peptidase A1 domain. Residue D431 is part of the active site. The tract at residues 608–635 (PPESESTPATEALRPVAGESASRRISEK) is disordered. D682 is an active-site residue. The disordered stretch occupies residues 768–794 (DQRPRGPDSGDGPKGRPTAPFTVPPLR). Basic and acidic residues predominate over residues 769-781 (QRPRGPDSGDGPK). Residues 821 to 841 (LWVAAALVVVAILIAVTVILL) form a helical membrane-spanning segment. Residues 842–969 (HTIKRPSRSS…TLLDLPLGGE (128 aa)) lie on the Cytoplasmic side of the membrane. Positions 922-969 (EDDGDFFGDDSVPSAEEQETAPSLSLREESSPFSASQSTLLDLPLGGE) are disordered. Polar residues predominate over residues 952-961 (SPFSASQSTL).

Belongs to the peptidase A1 family. May be auto-cleaved to produce a 55 kDa form.

It localises to the golgi apparatus membrane. In terms of biological role, in tachyzoites, plays an essential role in the export of several dense granule proteins into the host cell by cleaving the localization motif RRLxx (termed Toxoplasma export element (TEXEL)) located downstream of the N-terminal secretory signal sequence. However, can also regulate the export of proteins that lack the TEXEL motif, such as GRA24. Requires Arg at P3 and P2, and Leu at P1 in the substrate TEXEL motif and, specifically, cleaves after Leu. Cleaves GRA16; proteolytic cleavage is essential for the correct trafficking of GRA16 from the parasite into the infected host nucleus. Cleaves GRA19 and GRA20. Cleaves MYR1. Cleaves LCAT, GRA44, GRA46, GRA46, ROP35/WNG1 and ROP34/WNG2. By regulating the export of dense granule proteins into the host cell, regulates multiple processes during tachyzoite infection of host cells, including recruitment of host mitochondria to the parasitophorous vacuole (PV), formation of the nanotubular network (NTN) or intravacuolar network (IVN) which are membranous tubules that bud from the PV membrane into the vacuolar lumen and, up-regulation of host cell genes to facilitate the parasite infection and modulate the host innate immune response. At the bradyzoite stage, also involved in the formation of the cyst wall. In Toxoplasma gondii, this protein is Aspartic protease 5.